A 182-amino-acid polypeptide reads, in one-letter code: Large ribosomal subunit protein eL15 (182 aa).

Belongs to the eukaryotic ribosomal protein eL15 family.

This chain is Large ribosomal subunit protein eL15 (rpl15e), found in Methanothermobacter thermautotrophicus (strain ATCC 29096 / DSM 1053 / JCM 10044 / NBRC 100330 / Delta H) (Methanobacterium thermoautotrophicum).